The sequence spans 206 residues: dCTP deaminase, dUMP-forming (206 aa).

Residues 117–122 (RSSFGR), Asp-135, 143–145 (TLE), Gln-163, Tyr-177, Lys-184, and Gln-188 contribute to the dCTP site. Glu-145 (proton donor/acceptor) is an active-site residue.

The protein belongs to the dCTP deaminase family. Homotrimer.

It catalyses the reaction dCTP + 2 H2O = dUMP + NH4(+) + diphosphate. Its pathway is pyrimidine metabolism; dUMP biosynthesis; dUMP from dCTP: step 1/1. In terms of biological role, bifunctional enzyme that catalyzes both the deamination of dCTP to dUTP and the hydrolysis of dUTP to dUMP without releasing the toxic dUTP intermediate. This Methanococcus maripaludis (strain C7 / ATCC BAA-1331) protein is dCTP deaminase, dUMP-forming.